The following is a 322-amino-acid chain: Beta-ketoacyl-[acyl-carrier-protein] synthase III (322 aa).

Residues Cys113 and His249 contribute to the active site. Positions 250-254 (QANLR) are ACP-binding. Residue Asn279 is part of the active site.

The protein belongs to the thiolase-like superfamily. FabH family. In terms of assembly, homodimer.

Its subcellular location is the cytoplasm. It catalyses the reaction malonyl-[ACP] + acetyl-CoA + H(+) = 3-oxobutanoyl-[ACP] + CO2 + CoA. Its pathway is lipid metabolism; fatty acid biosynthesis. Functionally, catalyzes the condensation reaction of fatty acid synthesis by the addition to an acyl acceptor of two carbons from malonyl-ACP. Catalyzes the first condensation reaction which initiates fatty acid synthesis and may therefore play a role in governing the total rate of fatty acid production. Possesses both acetoacetyl-ACP synthase and acetyl transacylase activities. Its substrate specificity determines the biosynthesis of branched-chain and/or straight-chain of fatty acids. This is Beta-ketoacyl-[acyl-carrier-protein] synthase III from Marinobacter nauticus (strain ATCC 700491 / DSM 11845 / VT8) (Marinobacter aquaeolei).